A 121-amino-acid chain; its full sequence is MSRVKGGTVTHARHKKVIKAAKGYYGRRKNTFKVARQAVDKANQYATRDRKNRKRNFRALWIQRINAAVRSHDEALTYSRFINGLNLAGIEVDRKVLADLAVHEPEAFGAIVRQAQDALAA.

It belongs to the bacterial ribosomal protein bL20 family.

Its function is as follows. Binds directly to 23S ribosomal RNA and is necessary for the in vitro assembly process of the 50S ribosomal subunit. It is not involved in the protein synthesizing functions of that subunit. This Ruegeria sp. (strain TM1040) (Silicibacter sp.) protein is Large ribosomal subunit protein bL20.